A 94-amino-acid polypeptide reads, in one-letter code: ESAT-6-like protein EsxL (94 aa).

The protein belongs to the WXG100 family. ESAT-6 subfamily. As to quaternary structure, strongly interacts with EsxK to form a heterodimeric complex under reducing conditions.

The protein resides in the secreted. The chain is ESAT-6-like protein EsxL from Mycobacterium tuberculosis (strain CDC 1551 / Oshkosh).